The chain runs to 313 residues: Foldase protein PrsA (313 aa).

A signal peptide spans 1-20; it reads MKKKLLAGAITLLSVATLAA. The N-palmitoyl cysteine moiety is linked to residue C21. A lipid anchor (S-diacylglycerol cysteine) is attached at C21. The region spanning 143-241 is the PpiC domain; it reads TPDVTAQIIR…SQYYIVKLTK (99 aa).

This sequence belongs to the PrsA family.

Its subcellular location is the cell membrane. The enzyme catalyses [protein]-peptidylproline (omega=180) = [protein]-peptidylproline (omega=0). Functionally, plays a major role in protein secretion by helping the post-translocational extracellular folding of several secreted proteins. The polypeptide is Foldase protein PrsA (Streptococcus pneumoniae serotype 4 (strain ATCC BAA-334 / TIGR4)).